We begin with the raw amino-acid sequence, 232 residues long: Sugar fermentation stimulation protein homolog (232 aa).

Belongs to the SfsA family.

This chain is Sugar fermentation stimulation protein homolog, found in Alkaliphilus metalliredigens (strain QYMF).